Here is a 101-residue protein sequence, read N- to C-terminus: Ascorbate-specific PTS system EIIB component (101 aa).

Positions 3–96 (VRILAVCGNG…KLLEVIKAHF (94 aa)) constitute a PTS EIIB type-2 domain. Catalysis depends on Cys9, which acts as the Phosphocysteine intermediate. Cys9 bears the Phosphocysteine mark.

It is found in the cytoplasm. It catalyses the reaction N(pros)-phospho-L-histidyl-[protein] + L-ascorbate(out) = L-ascorbate 6-phosphate(in) + L-histidyl-[protein]. In terms of biological role, the phosphoenolpyruvate-dependent sugar phosphotransferase system (sugar PTS), a major carbohydrate active transport system, catalyzes the phosphorylation of incoming sugar substrates concomitantly with their translocation across the cell membrane. The enzyme II UlaABC PTS system is involved in ascorbate transport. The chain is Ascorbate-specific PTS system EIIB component (ulaB) from Shigella sonnei (strain Ss046).